The sequence spans 443 residues: Glutamine synthetase (443 aa).

The 86-residue stretch at 16–101 (NGVKFIRLQF…LICDVYKPDG (86 aa)) folds into the GS beta-grasp domain. In terms of domain architecture, GS catalytic spans 108 to 443 (PRHVLKRANA…WELENYLNKY (336 aa)). Positions 131 and 133 each coordinate Mg(2+). An ATP-binding site is contributed by glutamate 183. Mg(2+) contacts are provided by glutamate 188 and glutamate 195. Residues 239 to 240 (NG) and glycine 240 contribute to the L-glutamate site. Residue histidine 244 coordinates Mg(2+). Position 248 (serine 248) interacts with ATP. L-glutamate contacts are provided by arginine 297, glutamate 303, and arginine 315. Positions 315 and 320 each coordinate ATP. Residue glutamate 332 coordinates Mg(2+). Residue arginine 334 participates in L-glutamate binding.

This sequence belongs to the glutamine synthetase family. In terms of assembly, oligomer of 12 subunits arranged in the form of two hexagons. In its feedback-inhibited form, interacts with TnrA in order to block its DNA-binding activity. Mg(2+) serves as cofactor.

It localises to the cytoplasm. The catalysed reaction is L-glutamate + NH4(+) + ATP = L-glutamine + ADP + phosphate + H(+). With respect to regulation, inhibited by glutamine. In terms of biological role, glutamine synthetase (GS) is an unusual multitasking protein that functions as an enzyme, a transcription coregulator, and a chaperone in ammonium assimilation and in the regulation of genes involved in nitrogen metabolism. It catalyzes the ATP-dependent biosynthesis of glutamine from glutamate and ammonia. Feedback-inhibited GlnA also interacts with and regulates the activity of the transcriptional regulator TnrA. During nitrogen limitation, TnrA is in its DNA-binding active state and turns on the transcription of genes required for nitrogen assimilation. Under conditions of nitrogen excess, feedback-inhibited GlnA forms a stable complex with TnrA, which inhibits its DNA-binding activity. In contrast, feedback-inhibited GlnA acts as a chaperone to stabilize the DNA-binding activity of GlnR, which represses the transcription of nitrogen assimilation genes. The polypeptide is Glutamine synthetase (Clostridium saccharobutylicum).